A 503-amino-acid chain; its full sequence is Aromatase 2 (503 aa).

C437 is a heme binding site.

The protein belongs to the cytochrome P450 family. It depends on heme as a cofactor.

Its subcellular location is the membrane. The catalysed reaction is testosterone + 3 reduced [NADPH--hemoprotein reductase] + 3 O2 = 17beta-estradiol + formate + 3 oxidized [NADPH--hemoprotein reductase] + 4 H2O + 4 H(+). It catalyses the reaction androst-4-ene-3,17-dione + 3 reduced [NADPH--hemoprotein reductase] + 3 O2 = estrone + formate + 3 oxidized [NADPH--hemoprotein reductase] + 4 H2O + 4 H(+). Functionally, catalyzes the formation of aromatic C18 estrogens from C19 androgens. This chain is Aromatase 2 (CYP19A2), found in Sus scrofa (Pig).